The following is a 478-amino-acid chain: Proline--tRNA ligase (478 aa).

It belongs to the class-II aminoacyl-tRNA synthetase family. ProS type 3 subfamily. Homodimer.

Its subcellular location is the cytoplasm. The enzyme catalyses tRNA(Pro) + L-proline + ATP = L-prolyl-tRNA(Pro) + AMP + diphosphate. In terms of biological role, catalyzes the attachment of proline to tRNA(Pro) in a two-step reaction: proline is first activated by ATP to form Pro-AMP and then transferred to the acceptor end of tRNA(Pro). The protein is Proline--tRNA ligase of Ruminiclostridium cellulolyticum (strain ATCC 35319 / DSM 5812 / JCM 6584 / H10) (Clostridium cellulolyticum).